The following is a 544-amino-acid chain: Cytochrome P450 monooxygenase tenB (544 aa).

Residues Leu-13–Trp-33 form a helical membrane-spanning segment. The segment covering Phe-438–Lys-448 has biased composition (basic and acidic residues). Positions Phe-438–Asp-467 are disordered. Cys-486 is a heme binding site.

The protein belongs to the cytochrome P450 family. The cofactor is heme.

The protein resides in the membrane. The protein operates within secondary metabolite biosynthesis. Its function is as follows. Cytochrome P450 monooxygenase; part of the gene cluster that mediates the biosynthesis of tenellin-type 2-pyridones, iron-chelating compounds involved in iron stress tolerance, competition with the natural competitor fungus Metarhizium robertsii and insect hosts infection. TenB catalyzes the selective N-hydroxylation of the 2-pyridone nitrogen of yield tellinin and 15-hydroxytellenin (15-HT), respectively. The pathway begins with the assembly of the polyketide-amino acid backbone by the hybrid PKS-NRPS tenS with the help of the enoyl reductase tenC. These enzymes catalyze the synthesis of the pyrrolidine-2-dione intermediates pretellinin A, 11-hydropretellenin A, 12-hydropretellenin A, 13-hydropretellenin A, 14-hydropretellenin A, 12-oxopretellenin A and prototellinin D. The cytochrome P450 monooxygenase tenA then catalyzes an oxidative ring expansion of pretenellin A and 14-hydropretellenin A to form the 2-pyridone core, leading to pretenellin B and pyridovericin, respectively. The cytochrome P450 monooxygenase tenB is then required for the selective N-hydroxylation of the 2-pyridone nitrogen of yield tellinin and 15-hydroxytellenin (15-HT), respectively. The UDP-glucosyltransferase GT1 and the methyltransferase MT1, located outside the tenS gene cluster, contribute to the stepwise glycosylation and methylation of 15-HT to obtain the glycoside pyridovericin-N-O-(4-O-methyl-beta-D-glucopyranoside) (PMGP). Additional related compounds such as 1-O-methyl-15-HT, (8Z)-1-O-methyl-15-HT, and O-methyltenellin A are also produced but the enzymes involved in their biosynthesis have still to be determined. The chain is Cytochrome P450 monooxygenase tenB from Beauveria bassiana (strain ARSEF 2860) (White muscardine disease fungus).